The chain runs to 105 residues: Large ribosomal subunit protein bL21 (105 aa).

The protein belongs to the bacterial ribosomal protein bL21 family. In terms of assembly, part of the 50S ribosomal subunit. Contacts protein L20.

This protein binds to 23S rRNA in the presence of protein L20. This chain is Large ribosomal subunit protein bL21, found in Rickettsia peacockii (strain Rustic).